Reading from the N-terminus, the 383-residue chain is Acetylornithine deacetylase (383 aa).

H80 is a Zn(2+) binding site. D82 is an active-site residue. Residue D112 participates in Zn(2+) binding. Residue E144 is part of the active site. Residues E145, E169, and H355 each contribute to the Zn(2+) site.

The protein belongs to the peptidase M20A family. ArgE subfamily. In terms of assembly, homodimer. It depends on Zn(2+) as a cofactor. Co(2+) is required as a cofactor. Requires glutathione as cofactor.

It localises to the cytoplasm. It carries out the reaction N(2)-acetyl-L-ornithine + H2O = L-ornithine + acetate. It participates in amino-acid biosynthesis; L-arginine biosynthesis; L-ornithine from N(2)-acetyl-L-ornithine (linear): step 1/1. In terms of biological role, catalyzes the hydrolysis of the amide bond of N(2)-acetylated L-amino acids. Cleaves the acetyl group from N-acetyl-L-ornithine to form L-ornithine, an intermediate in L-arginine biosynthesis pathway, and a branchpoint in the synthesis of polyamines. The sequence is that of Acetylornithine deacetylase from Shigella boydii serotype 18 (strain CDC 3083-94 / BS512).